Here is a 430-residue protein sequence, read N- to C-terminus: Serine--tRNA ligase (430 aa).

236–238 (TAE) serves as a coordination point for L-serine. 267-269 (RSE) provides a ligand contact to ATP. E290 contributes to the L-serine binding site. 354 to 357 (EISS) provides a ligand contact to ATP. Residue S390 coordinates L-serine.

This sequence belongs to the class-II aminoacyl-tRNA synthetase family. Type-1 seryl-tRNA synthetase subfamily. As to quaternary structure, homodimer. The tRNA molecule binds across the dimer.

It is found in the cytoplasm. The catalysed reaction is tRNA(Ser) + L-serine + ATP = L-seryl-tRNA(Ser) + AMP + diphosphate + H(+). It carries out the reaction tRNA(Sec) + L-serine + ATP = L-seryl-tRNA(Sec) + AMP + diphosphate + H(+). The protein operates within aminoacyl-tRNA biosynthesis; selenocysteinyl-tRNA(Sec) biosynthesis; L-seryl-tRNA(Sec) from L-serine and tRNA(Sec): step 1/1. Its function is as follows. Catalyzes the attachment of serine to tRNA(Ser). Is also able to aminoacylate tRNA(Sec) with serine, to form the misacylated tRNA L-seryl-tRNA(Sec), which will be further converted into selenocysteinyl-tRNA(Sec). This chain is Serine--tRNA ligase, found in Idiomarina loihiensis (strain ATCC BAA-735 / DSM 15497 / L2-TR).